A 405-amino-acid chain; its full sequence is Glucose-1-phosphate adenylyltransferase 1 (405 aa).

Alpha-D-glucose 1-phosphate is bound by residues tyrosine 96, glycine 161, 176-177 (EK), and serine 194.

The protein belongs to the bacterial/plant glucose-1-phosphate adenylyltransferase family. Homotetramer.

The enzyme catalyses alpha-D-glucose 1-phosphate + ATP + H(+) = ADP-alpha-D-glucose + diphosphate. The protein operates within glycan biosynthesis; glycogen biosynthesis. Functionally, involved in the biosynthesis of ADP-glucose, a building block required for the elongation reactions to produce glycogen. Catalyzes the reaction between ATP and alpha-D-glucose 1-phosphate (G1P) to produce pyrophosphate and ADP-Glc. The protein is Glucose-1-phosphate adenylyltransferase 1 of Vibrio vulnificus (strain CMCP6).